Reading from the N-terminus, the 246-residue chain is Putative protein phosphatase 2C-type (246 aa).

Residues 2–240 enclose the PPM-type phosphatase domain; that stretch reads KISLKTDIGQ…DNITIALVHN (239 aa). The Mn(2+) site is built by aspartate 36, glycine 37, aspartate 192, and aspartate 231.

Requires Mg(2+) as cofactor. Mn(2+) serves as cofactor.

The enzyme catalyses O-phospho-L-seryl-[protein] + H2O = L-seryl-[protein] + phosphate. The catalysed reaction is O-phospho-L-threonyl-[protein] + H2O = L-threonyl-[protein] + phosphate. The polypeptide is Putative protein phosphatase 2C-type (Streptococcus pyogenes serotype M6 (strain ATCC BAA-946 / MGAS10394)).